Here is a 439-residue protein sequence, read N- to C-terminus: Testican-1 (439 aa).

The N-terminal stretch at Met1–Ser21 is a signal peptide. 5 disulfides stabilise this stretch: Cys86-Cys97, Cys91-Cys107, Cys136-Cys166, Cys139-Cys159, and Cys148-Cys180. Residues Pro130–Cys182 form the Kazal-like domain. An O-linked (GalNAc...) threonine glycan is attached at Thr228. Positions Gly310–Cys376 constitute a Thyroglobulin type-1 domain. 3 cysteine pairs are disulfide-bonded: Cys313–Cys337, Cys348–Cys355, and Cys357–Cys376. 2 O-linked (Xyl...) (glycosaminoglycan) serine glycosylation sites follow: Ser383 and Ser388. The interval Val415–Trp439 is disordered. Acidic residues predominate over residues Glu422–Trp439.

In terms of processing, O-glycosylated. Glycosaminoglycan that contains chondroitin sulfate and heparan sulfate.

The protein resides in the secreted. The protein localises to the extracellular space. It localises to the extracellular matrix. Its function is as follows. May play a role in cell-cell and cell-matrix interactions. May contribute to various neuronal mechanisms in the central nervous system. In Homo sapiens (Human), this protein is Testican-1 (SPOCK1).